Here is a 407-residue protein sequence, read N- to C-terminus: Phosphopentomutase (407 aa).

Asp10, Asp306, His311, Asp347, His348, and His359 together coordinate Mn(2+).

This sequence belongs to the phosphopentomutase family. Mn(2+) serves as cofactor.

The protein localises to the cytoplasm. It carries out the reaction 2-deoxy-alpha-D-ribose 1-phosphate = 2-deoxy-D-ribose 5-phosphate. The enzyme catalyses alpha-D-ribose 1-phosphate = D-ribose 5-phosphate. It participates in carbohydrate degradation; 2-deoxy-D-ribose 1-phosphate degradation; D-glyceraldehyde 3-phosphate and acetaldehyde from 2-deoxy-alpha-D-ribose 1-phosphate: step 1/2. In terms of biological role, isomerase that catalyzes the conversion of deoxy-ribose 1-phosphate (dRib-1-P) and ribose 1-phosphate (Rib-1-P) to deoxy-ribose 5-phosphate (dRib-5-P) and ribose 5-phosphate (Rib-5-P), respectively. This chain is Phosphopentomutase, found in Buchnera aphidicola subsp. Acyrthosiphon pisum (strain APS) (Acyrthosiphon pisum symbiotic bacterium).